The sequence spans 372 residues: Adaptive-response sensory-kinase SasA (372 aa).

Residues 147 to 360 (MVAHELRTPL…CFHFTVPVWQ (214 aa)) enclose the Histidine kinase domain. H150 bears the Phosphohistidine; by autocatalysis mark.

As to quaternary structure, homooligomerizes. Interacts with KaiC. Participates in the KaiBC complex, whose core is composed of a KaiC homohexamer and 6 KaiB.

The catalysed reaction is ATP + protein L-histidine = ADP + protein N-phospho-L-histidine.. In terms of biological role, member of the two-component regulatory system SasA/RpaA involved in genome-wide circadian gene expression. One of several clock output pathways. Participates in the Kai clock protein complex, the main circadian regulator in cyanobacteria, via its interaction with KaiC. KaiC enhances the autophosphorylation activity of SasA, which then transfers its phosphate group to RpaA to activate it. In addition to its output function, recruits fold-shifted KaiB (KaiB(fs)) to KaiC to cooperatively form the KaiB(6):KaiC(6) complex (independent of SasA kinase activity). Required for robustness of the circadian rhythm of gene expression and is involved in clock output, also required for adaptation to light/dark cycles. This chain is Adaptive-response sensory-kinase SasA, found in Prochlorococcus marinus subsp. pastoris (strain CCMP1986 / NIES-2087 / MED4).